Here is a 233-residue protein sequence, read N- to C-terminus: UPF0758 protein TTE0897 (233 aa).

One can recognise an MPN domain in the interval 108 to 230; it reads SVTSPEDVIN…GISLKEKGYY (123 aa). Positions 179, 181, and 192 each coordinate Zn(2+). Positions 179 to 192 match the JAMM motif motif; it reads HNHPSGDPTPSRED.

It belongs to the UPF0758 family.

The polypeptide is UPF0758 protein TTE0897 (Caldanaerobacter subterraneus subsp. tengcongensis (strain DSM 15242 / JCM 11007 / NBRC 100824 / MB4) (Thermoanaerobacter tengcongensis)).